Consider the following 350-residue polypeptide: Biotin synthase (350 aa).

A Radical SAM core domain is found at 38-256 (NHVQVSTLLS…IAVARIMMPE (219 aa)). Cys53, Cys57, and Cys60 together coordinate [4Fe-4S] cluster. Positions 97, 128, 188, and 260 each coordinate [2Fe-2S] cluster.

This sequence belongs to the radical SAM superfamily. Biotin synthase family. In terms of assembly, homodimer. It depends on [4Fe-4S] cluster as a cofactor. The cofactor is [2Fe-2S] cluster.

It carries out the reaction (4R,5S)-dethiobiotin + (sulfur carrier)-SH + 2 reduced [2Fe-2S]-[ferredoxin] + 2 S-adenosyl-L-methionine = (sulfur carrier)-H + biotin + 2 5'-deoxyadenosine + 2 L-methionine + 2 oxidized [2Fe-2S]-[ferredoxin]. The protein operates within cofactor biosynthesis; biotin biosynthesis; biotin from 7,8-diaminononanoate: step 2/2. Catalyzes the conversion of dethiobiotin (DTB) to biotin by the insertion of a sulfur atom into dethiobiotin via a radical-based mechanism. This is Biotin synthase from Aliivibrio fischeri (strain MJ11) (Vibrio fischeri).